Reading from the N-terminus, the 277-residue chain is Phosphoenolpyruvate synthase regulatory protein (277 aa).

Residue 157–164 (GVSRCGKT) coordinates ADP.

Belongs to the pyruvate, phosphate/water dikinase regulatory protein family. PSRP subfamily.

The catalysed reaction is [pyruvate, water dikinase] + ADP = [pyruvate, water dikinase]-phosphate + AMP + H(+). It carries out the reaction [pyruvate, water dikinase]-phosphate + phosphate + H(+) = [pyruvate, water dikinase] + diphosphate. Its function is as follows. Bifunctional serine/threonine kinase and phosphorylase involved in the regulation of the phosphoenolpyruvate synthase (PEPS) by catalyzing its phosphorylation/dephosphorylation. The protein is Phosphoenolpyruvate synthase regulatory protein of Escherichia coli O17:K52:H18 (strain UMN026 / ExPEC).